Consider the following 592-residue polypeptide: Sodium- and chloride-dependent transporter XTRP3 (592 aa).

Over 1 to 5 (MEKAR) the chain is Cytoplasmic. A helical transmembrane segment spans residues 6 to 26 (PLWANSLQFVFACISYAVGLG). The Extracellular portion of the chain corresponds to 27–42 (NVWRFPYLCQMYGGGS). Residues 43-63 (FLVPYIIMLIVEGMPLLYLEL) traverse the membrane as a helical segment. Residues 64–79 (AVGQRMRQGSIGAWRT) are Cytoplasmic-facing. Residues 80-100 (ISPYLSGVGVASVVVSFFLSM) form a helical membrane-spanning segment. Residues 101–165 (YYNVINAWAF…ISPSLQENGG (65 aa)) lie on the Extracellular side of the membrane. The N-linked (GlcNAc...) asparagine glycan is linked to Asn131. A helical transmembrane segment spans residues 166–186 (VQWEPALCLLLAWLVVYLCIL). The Cytoplasmic portion of the chain corresponds to 187-194 (RGTESTGK). A helical transmembrane segment spans residues 195–215 (VVYFTASLPYCVLIIYLIRGL). Over 216–241 (TLHGATNGLMYMFTPKIEQLANPKAW) the chain is Extracellular. Residues 242-262 (INAATQIFFSLGLGFGSLIAF) form a helical membrane-spanning segment. Over 263–276 (ASYNEPSNNCQKHA) the chain is Cytoplasmic. A helical transmembrane segment spans residues 277-297 (IIVSLINSFTSIFASIVTFSI). Topologically, residues 298–389 (YGFKATFNYE…EAIKNMEVSQ (92 aa)) are extracellular. A glycan (N-linked (GlcNAc...) asparagine) is linked at Asn357. The chain crosses the membrane as a helical span at residues 390–410 (LWSVLYFFMLLMLGIGSMLGN). Residues 411-431 (TAAILTPLTDSKIISSHLPKE) are Cytoplasmic-facing. The chain crosses the membrane as a helical span at residues 432-452 (AISGLVCLVNCAIGMVFTMEA). Residues 453–465 (GNYWFDIFNDYAA) lie on the Extracellular side of the membrane. The chain crosses the membrane as a helical span at residues 466-486 (TLSLLLIVLVETIAVCYVYGL). Residues 487–504 (RRFESDLKAMTGRAVSWY) lie on the Cytoplasmic side of the membrane. Residues 505-525 (WKVMWAGVSPLLIVSLFVFYL) form a helical membrane-spanning segment. Residues 526–554 (SDYILTGTLKYQAWDASQGQLVTKDYPAY) are Extracellular-facing. The helical transmembrane segment at 555 to 575 (ALAVIGLLVASSTMCIPLAAL) threads the bilayer. Residues 576–592 (GTFVQRRLKRGDADPVA) are Cytoplasmic-facing.

Belongs to the sodium:neurotransmitter symporter (SNF) (TC 2.A.22) family. SLC6A20 subfamily. Kidney and small intestine. Expressed in the S3 segment of the proximal tubule. Expressed in neurons.

The protein localises to the apical cell membrane. It catalyses the reaction L-proline(out) + chloride(out) + 2 Na(+)(out) = L-proline(in) + chloride(in) + 2 Na(+)(in). It carries out the reaction L-pipecolate(out) + chloride(out) + 2 Na(+)(out) = L-pipecolate(in) + chloride(in) + 2 Na(+)(in). The enzyme catalyses sarcosine(out) + chloride(out) + 2 Na(+)(out) = sarcosine(in) + chloride(in) + 2 Na(+)(in). The catalysed reaction is N-methyl-L-proline(out) + chloride(out) + 2 Na(+)(out) = N-methyl-L-proline(in) + chloride(in) + 2 Na(+)(in). It catalyses the reaction 2-methyl-2-(methylamino)propanoate(out) + chloride(out) + 2 Na(+)(out) = 2-methyl-2-(methylamino)propanoate(in) + chloride(in) + 2 Na(+)(in). It carries out the reaction glycine betaine(out) + chloride(out) + 2 Na(+)(out) = glycine betaine(in) + chloride(in) + 2 Na(+)(in). The enzyme catalyses glycine(out) + chloride(out) + 2 Na(+)(out) = glycine(in) + chloride(in) + 2 Na(+)(in). Functionally, mediates the Na(+)- and Cl(-)-dependent uptake of imino acids such as L-proline, N-methyl-L-proline and pipecolate as well as N-methylated amino acids. Also transports glycine, regulates proline and glycine homeostasis in the brain playing a role in the modulation of NMDAR currents. In Homo sapiens (Human), this protein is Sodium- and chloride-dependent transporter XTRP3.